We begin with the raw amino-acid sequence, 960 residues long: Endosome/lysosome-associated apoptosis and autophagy regulator family member 2 (960 aa).

The tract at residues 1–26 is disordered; the sequence is MLFLRPGPARGRGRGRPARAPHSGLS. Positions 1 to 44 are cleaved as a signal peptide; sequence MLFLRPGPARGRGRGRPARAPHSGLSPPWSPAWICCWALAGCQA. Topologically, residues 45–860 are extracellular; sequence AWAGAGDLPS…TCETVDFWLK (816 aa). N-linked (GlcNAc...) asparagine glycosylation is present at Asn-171. Intrachain disulfides connect Cys-295–Cys-312, Cys-325–Cys-348, and Cys-328–Cys-360. Asn-407 and Asn-622 each carry an N-linked (GlcNAc...) asparagine glycan. The MRH domain occupies 597 to 808; the sequence is PTCPYIRSMA…LWESVEACPL (212 aa). Cystine bridges form between Cys-599/Cys-651, Cys-661/Cys-689, Cys-758/Cys-794, and Cys-770/Cys-806. Residues 861-881 form a helical membrane-spanning segment; the sequence is VGAGVGAFTAVLLVALTCYFW. Residues 882–960 are Cytoplasmic-facing; that stretch reads KKNQKLEYKY…QLKSSRSPNI (79 aa). Ser-949 bears the Phosphoserine mark.

The protein belongs to the ELAPOR family.

Its subcellular location is the cell membrane. Functions as a regulator of the BMP signaling pathway and may be involved in epidermal differentiation. In Bos taurus (Bovine), this protein is Endosome/lysosome-associated apoptosis and autophagy regulator family member 2.